Reading from the N-terminus, the 166-residue chain is UBA-like domain-containing protein 2 (166 aa).

The interval 120–166 (QQPVWLPPASPTTHLHHHHHHPQPVWPPNSQPTGGPQKAMAAMDGQR) is disordered.

Belongs to the UBALD family.

This Xenopus tropicalis (Western clawed frog) protein is UBA-like domain-containing protein 2 (ubald2).